The following is a 427-amino-acid chain: Putative zinc protease AlbF (427 aa).

His-66 contributes to the Zn(2+) binding site. The active-site Proton acceptor is Glu-69. His-70 and Glu-142 together coordinate Zn(2+).

This sequence belongs to the peptidase M16 family. Zn(2+) serves as cofactor.

Functionally, required for production of the bacteriocin subtilosin. Could catalyze some step in the processing of presubtilosin. The polypeptide is Putative zinc protease AlbF (albF) (Bacillus subtilis).